The chain runs to 332 residues: DNA double-strand break repair nuclease NurA (332 aa).

Asp57 and Asp132 together coordinate Mn(2+).

Belongs to the NurA family. Mn(2+) serves as cofactor.

Functionally, involved in DNA double-strand break (DSB) repair. Probably acts with HerA to stimulate resection of the 5' strand and produce the long 3' single-strand that is required for RadA loading. Exhibits both single-stranded endonuclease activity and 5'-3' exonuclease activity on single-stranded and double-stranded DNA. This Sulfolobus acidocaldarius (strain ATCC 33909 / DSM 639 / JCM 8929 / NBRC 15157 / NCIMB 11770) protein is DNA double-strand break repair nuclease NurA.